The following is a 117-amino-acid chain: Large ribosomal subunit protein bL20c (117 aa).

This sequence belongs to the bacterial ribosomal protein bL20 family.

The protein resides in the plastid. It is found in the chloroplast. In terms of biological role, binds directly to 23S ribosomal RNA and is necessary for the in vitro assembly process of the 50S ribosomal subunit. It is not involved in the protein synthesizing functions of that subunit. In Drimys granadensis, this protein is Large ribosomal subunit protein bL20c.